The following is a 478-amino-acid chain: Dihydrolipoyl dehydrogenase (478 aa).

FAD is bound by residues 36 to 45 (ERYSTLGGVC), K54, and A117. C45 and C50 are joined by a disulfide. NAD(+) contacts are provided by residues 183-187 (GGGII), E206, V239, and 270-273 (AIGR). FAD contacts are provided by D313 and A321. The active-site Proton acceptor is H445.

Belongs to the class-I pyridine nucleotide-disulfide oxidoreductase family. In terms of assembly, homodimer. Requires FAD as cofactor.

Its subcellular location is the cytoplasm. It catalyses the reaction N(6)-[(R)-dihydrolipoyl]-L-lysyl-[protein] + NAD(+) = N(6)-[(R)-lipoyl]-L-lysyl-[protein] + NADH + H(+). In terms of biological role, lipoamide dehydrogenase is a component of the alpha-ketoacid dehydrogenase complexes. The polypeptide is Dihydrolipoyl dehydrogenase (lpdA) (Haemophilus influenzae (strain ATCC 51907 / DSM 11121 / KW20 / Rd)).